Here is an 82-residue protein sequence, read N- to C-terminus: Pigment-dispersing hormone peptides (82 aa).

A signal peptide spans 1 to 26 (MIGKYLSWFMLAFLFGFVLESYRVQS). Ala-80 is modified (alanine amide).

Belongs to the arthropod PDH family. In terms of tissue distribution, expressed strongly in the head and weakly in the ventral nerve cord. Not detected in the midgut cecum or hindgut. In the cephalic neural complex, specifically localized to cells within the optic lobe, anteromedian protocerebrum, accessory lobe, tritocerebrum, and subesophageal ganglion.

It is found in the secreted. The pigment-dispersing hormone causes the migration of the distal retinal pigment into the proximal end of the pigment chromatophore cells and thus decreases the amount of light entering the retinulas. May also function as a neurotransmitter and/or neuromodulator. This is Pigment-dispersing hormone peptides from Armadillidium vulgare (Pillbug).